The following is a 523-amino-acid chain: Lysine-specific demethylase 4D (523 aa).

Residues 18–60 (IMIFHPTKEEFNDFDKYIAYMESQGAHRAGLAKIIPPKEWKAR) enclose the JmjN domain. A polyADP-ribosyl glutamic acid mark is found at Glu-26 and Glu-27. Tyr-136 is a 2-oxoglutarate binding site. One can recognise a JmjC domain in the interval 146-312 (DENTKQWNLG…YGKMASQCSC (167 aa)). Fe cation is bound by residues His-192 and Glu-194. 2-oxoglutarate contacts are provided by Asn-202 and Lys-210. 2 residues coordinate Zn(2+): Cys-238 and His-244. Lys-245 contributes to the 2-oxoglutarate binding site. A Fe cation-binding site is contributed by His-280. Residues Cys-310 and Cys-312 each coordinate Zn(2+). The tract at residues 407 to 523 (RRSAVSGTAT…ASGCSWAPVP (117 aa)) is disordered. Residues 428–440 (KPSSTPSSTPGPS) show a composition bias toward low complexity. A compositionally biased stretch (basic residues) spans 448–458 (NGRRGRGRPPQ).

It belongs to the JHDM3 histone demethylase family. Fe(2+) is required as a cofactor. Post-translationally, ubiquitinated via 'Lys-63'-linked ubiquitin chains. Deubiquitinated by USP14 with the help of TRIM14 leading to stabilization.

The protein resides in the nucleus. The catalysed reaction is N(6),N(6),N(6)-trimethyl-L-lysyl(9)-[histone H3] + 2 2-oxoglutarate + 2 O2 = N(6)-methyl-L-lysyl(9)-[histone H3] + 2 formaldehyde + 2 succinate + 2 CO2. Histone demethylase that specifically demethylates 'Lys-9' of histone H3, thereby playing a central role in histone code. Does not demethylate histone H3 'Lys-4', H3 'Lys-27', H3 'Lys-36' nor H4 'Lys-20'. Demethylates both di- and trimethylated H3 'Lys-9' residue, while it has no activity on monomethylated residues. Demethylation of Lys residue generates formaldehyde and succinate. This is Lysine-specific demethylase 4D (KDM4D) from Homo sapiens (Human).